The chain runs to 205 residues: Auxin-responsive protein IAA8 (205 aa).

Positions 1–48 (MECMASTEESLPASSSMDSCSGELPTTTTTAPAQSTASSGCRPPATAA) are disordered. Residues 7-19 (TEESLPASSSMDS) are compositionally biased toward polar residues. The segment covering 25–39 (PTTTTTAPAQSTASS) has biased composition (low complexity). The short motif at 58–62 (LRLGL) is the EAR-like (transcriptional repression) element. A disordered region spans residues 71-98 (DGNNPSTPRSSLTTATVTADRGGGGGGH). Polar residues predominate over residues 73–87 (NNPSTPRSSLTTATV). One can recognise a PB1 domain in the interval 103 to 199 (SLFVKVYMEG…KRLRIARADD (97 aa)).

The protein belongs to the Aux/IAA family. In terms of assembly, homodimers and heterodimers. In terms of tissue distribution, highly expressed in green shoots. Expressed in flowers.

It is found in the nucleus. Functionally, aux/IAA proteins are short-lived transcriptional factors that function as repressors of early auxin response genes at low auxin concentrations. The polypeptide is Auxin-responsive protein IAA8 (IAA8) (Oryza sativa subsp. japonica (Rice)).